The sequence spans 548 residues: Alpha-1,3-mannosyl-glycoprotein 4-beta-N-acetylglucosaminyltransferase B (548 aa).

The Cytoplasmic portion of the chain corresponds to M1–T7. A helical; Signal-anchor for type II membrane protein transmembrane segment spans residues F8–L28. Residues S29–D548 lie on the Lumenal side of the membrane. Positions V36 to D83 form a coiled coil. Residues N87 and N103 are each glycosylated (N-linked (GlcNAc...) asparagine).

The protein belongs to the glycosyltransferase 54 family. As to quaternary structure, interacts with SLC35A3. It depends on a divalent metal cation as a cofactor. In terms of processing, N-glycosylated. Widely expressed. Strongly overexpressed in pancreatic cancer.

The protein resides in the golgi apparatus membrane. It catalyses the reaction an N(4)-{beta-D-GlcNAc-(1-&gt;2)-alpha-D-Man-(1-&gt;3)-[alpha-D-Man-(1-&gt;6)]-beta-D-Man-(1-&gt;4)-beta-D-GlcNAc-(1-&gt;4)-beta-D-GlcNAc}-L-asparaginyl-[protein] + UDP-N-acetyl-alpha-D-glucosamine = an N(4)-{beta-D-GlcNAc-(1-&gt;2)-[beta-D-GlcNAc-(1-&gt;4)]-alpha-D-Man-(1-&gt;3)-[alpha-D-Man-(1-&gt;6)]-beta-D-Man-(1-&gt;4)-beta-D-GlcNAc-(1-&gt;4)-beta-D-GlcNAc}-L-asparaginyl-[protein] + UDP + H(+). The enzyme catalyses N(4)-{beta-D-GlcNAc-(1-&gt;2)-alpha-D-Man-(1-&gt;3)-[beta-D-GlcNAc-(1-&gt;2)-alpha-D-Man-(1-&gt;6)]-beta-D-Man-(1-&gt;4)-beta-D-GlcNAc-(1-&gt;4)-beta-D-GlcNAc}-L-asparaginyl-[protein] + UDP-N-acetyl-alpha-D-glucosamine = N(4)-{beta-D-GlcNAc-(1-&gt;2)-[beta-D-GlcNAc-(1-&gt;4)]-alpha-D-Man-(1-&gt;3)-[beta-D-GlcNAc-(1-&gt;2)-alpha-D-Man-(1-&gt;6)]-beta-D-Man-(1-&gt;4)-beta-D-GlcNAc-(1-&gt;4)-beta-D-GlcNAc}-L-asparaginyl-[protein] + UDP + H(+). It carries out the reaction an N(4)-{beta-D-GlcNAc-(1-&gt;2)-alpha-D-Man-(1-&gt;3)-[beta-D-GlcNAc-(1-&gt;2)-[beta-D-GlcNAc-(1-&gt;6)]-alpha-D-Man-(1-&gt;6)]-beta-D-Man-(1-&gt;4)-beta-D-GlcNAc-(1-&gt;4)-beta-D-GlcNAc}-L-asparaginyl-[protein] + UDP-N-acetyl-alpha-D-glucosamine = an N(4)-{beta-D-GlcNAc-(1-&gt;2)-[beta-D-GlcNAc-(1-&gt;4)]-alpha-D-Man-(1-&gt;3)-[beta-D-GlcNAc-(1-&gt;2)-[beta-D-GlcNAc-(1-&gt;6)]-alpha-D-Man-(1-&gt;6)]-beta-D-Man-(1-&gt;4)-beta-D-GlcNAc-(1-&gt;4)-beta-D-GlcNAc}-L-asparaginyl-[protein] + UDP + H(+). The catalysed reaction is an N(4)-{beta-D-GlcNAc-(1-&gt;2)-alpha-D-Man-(1-&gt;3)-[beta-D-GlcNAc-(1-&gt;2)-alpha-D-Man-(1-&gt;6)]-beta-D-Man-(1-&gt;4)-beta-D-GlcNAc-(1-&gt;4)-[alpha-L-Fuc-(1-&gt;6)]-beta-D-GlcNAc}-L-asparaginyl-[protein] + UDP-N-acetyl-alpha-D-glucosamine = N(4)-{beta-D-GlcNAc-(1-&gt;2)-[beta-D-GlcNAc-(1-&gt;4)]-alpha-D-Man-(1-&gt;3)-[beta-D-GlcNAc-(1-&gt;2)-alpha-D-Man-(1-&gt;6)]-beta-D-Man-(1-&gt;4)-beta-D-GlcNAc-(1-&gt;4)-[alpha-L-Fuc-(1-&gt;6)]-beta-D-GlcNAc}-asparaginyl-[protein] + UDP + H(+). It catalyses the reaction an N(4)-{beta-D-GlcNAc-(1-&gt;2)-alpha-D-Man-(1-&gt;3)-[beta-D-Gal-(1-&gt;4)-beta-D-GlcNAc-(1-&gt;2)-alpha-D-Man-(1-&gt;6)]-beta-D-Man-(1-&gt;4)-beta-D-GlcNAc-(1-&gt;4)-beta-D-GlcNAc}-L-asparaginyl-[protein] + UDP-N-acetyl-alpha-D-glucosamine = an N(4)-{beta-D-GlcNAc-(1-&gt;2)-[beta-D-GlcNAc-(1-&gt;4)]-alpha-D-Man-(1-&gt;3)-[beta-D-Gal-(1-&gt;4)-beta-D-GlcNAc-(1-&gt;2)-alpha-D-Man-(1-&gt;6)]-beta-D-Man-(1-&gt;4)-beta-D-GlcNAc-(1-&gt;4)-beta-D-GlcNAc}-L-asparaginyl-[protein] + UDP + H(+). The enzyme catalyses N(4)-{beta-D-GlcNAc-(1-&gt;2)-alpha-D-Man-(1-&gt;3)-[alpha-D-Man-(1-&gt;3)-{alpha-D-Man-(1-&gt;6)}-alpha-D-Man-(1-&gt;6)]-beta-D-Man-(1-&gt;4)-beta-D-GlcNAc-(1-&gt;4)-beta-D-GlcNAc}-asparaginyl-[protein] + UDP-N-acetyl-alpha-D-glucosamine = N(4)-{beta-D-GlcNAc-(1-&gt;2)-[beta-D-GlcNAc-(1-&gt;4)]-alpha-D-Man-(1-&gt;3)-[alpha-D-Man-(1-&gt;3)-{alpha-D-Man-(1-&gt;6)}-alpha-D-Man-(1-&gt;6)]-beta-D-Man-(1-&gt;4)-beta-D-GlcNAc-(1-&gt;4)-beta-D-GlcNAc}-asparaginyl-[protein] + UDP + H(+). It carries out the reaction N(4)-{beta-D-GlcNAc-(1-&gt;2)-alpha-D-Man-(1-&gt;3)-beta-D-Man-(1-&gt;4)-beta-D-GlcNAc-(1-&gt;4)-beta-D-GlcNAc}-asparaginyl-[protein] + UDP-N-acetyl-alpha-D-glucosamine = N(4)-{beta-D-GlcNAc-(1-&gt;2)-[beta-D-GlcNAc-(1-&gt;4)]-alpha-D-Man-(1-&gt;3)-beta-D-Man-(1-&gt;4)-beta-D-GlcNAc-(1-&gt;4)-beta-D-GlcNAc}-asparaginyl-[protein] + UDP + H(+). It functions in the pathway protein modification; protein glycosylation. Glycosyltransferase that catalyzes the transfer of GlcNAc from UDP-GlcNAc to the GlcNAcbeta1-2Manalpha1-3 arm of the core structure of N-linked glycans through a beta1-4 linkage and participates in the production of tri- and tetra-antennary N-linked sugar chains. Prefers complex-type N-glycans over hybrid-types. Has lower affinities for donors or acceptors than MGAT4A, suggesting that, under physiological conditions, it is not the main contributor in N-glycan biosynthesis. The polypeptide is Alpha-1,3-mannosyl-glycoprotein 4-beta-N-acetylglucosaminyltransferase B (Homo sapiens (Human)).